The chain runs to 385 residues: S-adenosylmethionine synthase (385 aa).

His-16 provides a ligand contact to ATP. Residue Asp-18 coordinates Mg(2+). Glu-44 contacts K(+). Positions 57 and 100 each coordinate L-methionine. Positions 100-110 are flexible loop; that stretch reads QSPDINQGVDR. Residues 164 to 166, 230 to 231, Asp-239, 245 to 246, Ala-262, and Lys-266 contribute to the ATP site; these read DGK, KF, and RK. Position 239 (Asp-239) interacts with L-methionine. Lys-270 is a binding site for L-methionine.

The protein belongs to the AdoMet synthase family. As to quaternary structure, homotetramer; dimer of dimers. Mg(2+) is required as a cofactor. Requires K(+) as cofactor.

It localises to the cytoplasm. It catalyses the reaction L-methionine + ATP + H2O = S-adenosyl-L-methionine + phosphate + diphosphate. It functions in the pathway amino-acid biosynthesis; S-adenosyl-L-methionine biosynthesis; S-adenosyl-L-methionine from L-methionine: step 1/1. Functionally, catalyzes the formation of S-adenosylmethionine (AdoMet) from methionine and ATP. The overall synthetic reaction is composed of two sequential steps, AdoMet formation and the subsequent tripolyphosphate hydrolysis which occurs prior to release of AdoMet from the enzyme. The protein is S-adenosylmethionine synthase of Helicobacter pylori (strain J99 / ATCC 700824) (Campylobacter pylori J99).